We begin with the raw amino-acid sequence, 138 residues long: Large ribosomal subunit protein uL16 (138 aa).

A compositionally biased stretch (basic residues) spans 1–13 (MLQPSRRKFRKEQ). The disordered stretch occupies residues 1–20 (MLQPSRRKFRKEQKGRNTGV).

The protein belongs to the universal ribosomal protein uL16 family. Part of the 50S ribosomal subunit.

In terms of biological role, binds 23S rRNA and is also seen to make contacts with the A and possibly P site tRNAs. This is Large ribosomal subunit protein uL16 from Leptothrix cholodnii (strain ATCC 51168 / LMG 8142 / SP-6) (Leptothrix discophora (strain SP-6)).